The following is a 278-amino-acid chain: Ribonuclease HII (278 aa).

One can recognise an RNase H type-2 domain in the interval 71–259 (WPVAGCDEAG…VAAAWDKHAP (189 aa)). The a divalent metal cation site is built by D77, E78, and D168.

It belongs to the RNase HII family. It depends on Mn(2+) as a cofactor. Requires Mg(2+) as cofactor.

Its subcellular location is the cytoplasm. It carries out the reaction Endonucleolytic cleavage to 5'-phosphomonoester.. In terms of biological role, endonuclease that specifically degrades the RNA of RNA-DNA hybrids. The polypeptide is Ribonuclease HII (Rhodopseudomonas palustris (strain BisA53)).